Here is a 183-residue protein sequence, read N- to C-terminus: Ferredoxin-2, mitochondrial (183 aa).

The N-terminal 52 residues, 1-52 (MAASVAWGGVNAGFLLRAARGAWWSRPGGFWGSGEAAAPAIARKFRATGSRP), are a transit peptide targeting the mitochondrion. The 2Fe-2S ferredoxin-type domain maps to 68 to 170 (VNVVFVDRSG…GAEFTLPKIT (103 aa)). Residues Cys-105, Cys-111, Cys-114, and Cys-151 each coordinate [2Fe-2S] cluster.

This sequence belongs to the adrenodoxin/putidaredoxin family. In terms of assembly, component of the mitochondrial core iron-sulfur cluster (ISC) complex composed of NFS1, LYRM4, NDUFAB1, ISCU, FXN, and FDX2; this complex is a heterohexamer containing two copies of each monomer. Form a heterodimer complex with NFS1. Interacts (in both their reduced and oxidized states) with the cysteine desulfurase (NFS1:LYRM4) complex; this interaction stimulates cysteine desulfurase activity, and serves as a reductant for Fe-S cluster assembly. The cofactor is [2Fe-2S] cluster.

It is found in the mitochondrion. Its subcellular location is the mitochondrion matrix. Electron donor, of the core iron-sulfur cluster (ISC) assembly complex, that acts to reduce the persulfide into sulfide during [2Fe-2S] clusters assembly on the scaffolding protein ISCU. The core iron-sulfur cluster (ISC) assembly complex is involved in the de novo synthesis of a [2Fe-2S] cluster, the first step of the mitochondrial iron-sulfur protein biogenesis. This process is initiated by the cysteine desulfurase complex (NFS1:LYRM4:NDUFAB1) that produces persulfide which is delivered on the scaffold protein ISCU in a FXN-dependent manner. Then this complex is stabilized by FDX2 which provides reducing equivalents to accomplish the [2Fe-2S] cluster assembly. Finally, the [2Fe-2S] cluster is transferred from ISCU to chaperone proteins, including HSCB, HSPA9 and GLRX5. Essential for coenzyme Q biosynthesis: together with FDXR, transfers the electrons required for the hydroxylation reaction performed by COQ6. This is Ferredoxin-2, mitochondrial from Bos taurus (Bovine).